Here is a 123-residue protein sequence, read N- to C-terminus: Seminal vesicle secretory protein 5 (123 aa).

An N-terminal signal peptide occupies residues 1–21 (MSPTGFFLLTVLLVLVTEAAS). A disordered region spans residues 50-123 (GSSSTFGAFS…TKVKTRITRK (74 aa)). Low complexity predominate over residues 64–75 (SRSNFKSKSPSS). Basic and acidic residues predominate over residues 77–87 (TREKVNEESRS).

Belongs to the SVP2/SVP5/SVP6 family. Testis.

It localises to the secreted. Its subcellular location is the extracellular space. This chain is Seminal vesicle secretory protein 5 (Svs5), found in Rattus norvegicus (Rat).